A 481-amino-acid chain; its full sequence is Glutamate--tRNA ligase (481 aa).

The 'HIGH' region motif lies at 9-19; it reads PSPTGNLHIGT. The 'KMSKS' region signature appears at 247-251; it reads KLSKR. Lys-250 serves as a coordination point for ATP.

The protein belongs to the class-I aminoacyl-tRNA synthetase family. Glutamate--tRNA ligase type 1 subfamily. Monomer.

It localises to the cytoplasm. It carries out the reaction tRNA(Glu) + L-glutamate + ATP = L-glutamyl-tRNA(Glu) + AMP + diphosphate. Functionally, catalyzes the attachment of glutamate to tRNA(Glu) in a two-step reaction: glutamate is first activated by ATP to form Glu-AMP and then transferred to the acceptor end of tRNA(Glu). This Trichormus variabilis (strain ATCC 29413 / PCC 7937) (Anabaena variabilis) protein is Glutamate--tRNA ligase.